A 345-amino-acid chain; its full sequence is Meiotically up-regulated gene 97 protein (345 aa).

A run of 2 helical transmembrane segments spans residues 292–312 (MWVL…GLWM) and 319–329 (FAHGMLLNLGI).

Its subcellular location is the membrane. Functionally, required for correct meiotic chromosome segregation. Appears to also have role in sporulation. This chain is Meiotically up-regulated gene 97 protein (mug97), found in Schizosaccharomyces pombe (strain 972 / ATCC 24843) (Fission yeast).